The chain runs to 184 residues: Homeobox protein LOX10 (184 aa).

2 disordered regions span residues 1-29 (KIVS…PLQH) and 129-184 (YKTK…NKPG). Residues 76 to 135 (RRKRRILFSQAQIYELERRFRQQKYLSAPEREHLATFIGLTPTQVKIWFQNHRYKTKKSK) constitute a DNA-binding region (homeobox). Composition is skewed to low complexity over residues 140–161 (NSPS…ASTT) and 174–184 (SNTTNNNNKPG).

The protein belongs to the NK-2 homeobox family. As to expression, expressed in a segmental pattern in the endoderm and in the cephalic nervous system.

It localises to the nucleus. May play a role in patterning the gut. This Helobdella triserialis (Leech) protein is Homeobox protein LOX10 (LOX10).